A 202-amino-acid chain; its full sequence is Orotate phosphoribosyltransferase (202 aa).

5-phospho-alpha-D-ribose 1-diphosphate-binding positions include K93 and 113 to 121; that span reads EDIITTGGS. The orotate site is built by T117 and R145.

This sequence belongs to the purine/pyrimidine phosphoribosyltransferase family. PyrE subfamily. In terms of assembly, homodimer. Mg(2+) serves as cofactor.

The enzyme catalyses orotidine 5'-phosphate + diphosphate = orotate + 5-phospho-alpha-D-ribose 1-diphosphate. Its pathway is pyrimidine metabolism; UMP biosynthesis via de novo pathway; UMP from orotate: step 1/2. In terms of biological role, catalyzes the transfer of a ribosyl phosphate group from 5-phosphoribose 1-diphosphate to orotate, leading to the formation of orotidine monophosphate (OMP). The sequence is that of Orotate phosphoribosyltransferase from Campylobacter jejuni subsp. jejuni serotype O:23/36 (strain 81-176).